Reading from the N-terminus, the 50-residue chain is MARYRCCRSQSRSRCCRPRRRCRRRRRRSCRARRRATRCCRRRYRLSRRY.

Belongs to the protamine P1 family. In terms of tissue distribution, testis.

It localises to the nucleus. It is found in the chromosome. Protamines substitute for histones in the chromatin of sperm during the haploid phase of spermatogenesis. They compact sperm DNA into a highly condensed, stable and inactive complex. The protein is Sperm protamine P1 (PRM1) of Trachypithecus phayrei (Phayre's leaf monkey).